The primary structure comprises 931 residues: 3'-5' exonuclease DinG (931 aa).

One can recognise an Exonuclease domain in the interval 7–162; sequence VVIDVETTGN…DSDAEVTGLI (156 aa). The region spanning 250 to 510 is the Helicase ATP-binding domain; that stretch reads LSELMPGYEK…KKMRQLFQRN (261 aa). 284-291 provides a ligand contact to ATP; sequence APPGIGKT. The DEAH box signature appears at 462 to 465; the sequence is DEAH. The region spanning 741 to 897 is the Helicase C-terminal domain; it reads DTARYIELMA…TIIILDRRIK (157 aa).

This sequence belongs to the helicase family. DinG subfamily. Type 2 sub-subfamily.

It localises to the cytoplasm. In terms of biological role, 3'-5' exonuclease. This Bacillus subtilis (strain 168) protein is 3'-5' exonuclease DinG.